We begin with the raw amino-acid sequence, 284 residues long: Nucleotide-binding protein Sbal223_0704 (284 aa).

8-15 (GRSGSGKS) contributes to the ATP binding site. A GTP-binding site is contributed by 56–59 (DVRN).

It belongs to the RapZ-like family.

In terms of biological role, displays ATPase and GTPase activities. The polypeptide is Nucleotide-binding protein Sbal223_0704 (Shewanella baltica (strain OS223)).